The chain runs to 623 residues: Glutathione import ATP-binding protein GsiA (623 aa).

2 ABC transporter domains span residues 15–269 (VSGL…QTLL) and 325–564 (LRSG…RKLM). ATP is bound by residues 49-56 (GESGSGKS) and 357-364 (GESGSGKS).

Belongs to the ABC transporter superfamily. Glutathione importer (TC 3.A.1.5.11) family. In terms of assembly, the complex is composed of two ATP-binding proteins (GsiA), two transmembrane proteins (GsiC and GsiD) and a solute-binding protein (GsiB).

The protein localises to the cell inner membrane. It carries out the reaction glutathione(out) + ATP + H2O = glutathione(in) + ADP + phosphate + H(+). Its function is as follows. Part of the ABC transporter complex GsiABCD involved in glutathione import. Responsible for energy coupling to the transport system. The protein is Glutathione import ATP-binding protein GsiA of Salmonella paratyphi A (strain ATCC 9150 / SARB42).